The chain runs to 231 residues: Protein APE_1056.1 (231 aa).

An AMMECR1 domain is found at 29–214 (VRIARRAVEE…ETEPRGPVVR (186 aa)).

This is Protein APE_1056.1 from Aeropyrum pernix (strain ATCC 700893 / DSM 11879 / JCM 9820 / NBRC 100138 / K1).